Consider the following 196-residue polypeptide: Probable thymidylate kinase (196 aa).

Position 7–14 (7–14) interacts with ATP; the sequence is GIDGAGKT.

Belongs to the thymidylate kinase family.

The enzyme catalyses dTMP + ATP = dTDP + ADP. The sequence is that of Probable thymidylate kinase (tmk) from Archaeoglobus fulgidus (strain ATCC 49558 / DSM 4304 / JCM 9628 / NBRC 100126 / VC-16).